Consider the following 500-residue polypeptide: Na(+)/H(+) antiporter NhaB (500 aa).

A run of 12 helical transmembrane segments spans residues 34–54 (LLLA…QFIF), 58–78 (MALK…ALLL), 96–116 (VILL…LLLF), 129–149 (AVLS…LDAL), 150–170 (TVTA…HRVA), 205–225 (LLMH…VGEP), 241–261 (FFLK…VTCV), 311–331 (ILIV…LMVI), 350–370 (FQDA…VAVI), 394–414 (MLYL…VATI), 450–470 (ATPN…APLI), and 477–497 (MVWM…WAVT).

Belongs to the NhaB Na(+)/H(+) (TC 2.A.34) antiporter family.

Its subcellular location is the cell inner membrane. The catalysed reaction is 2 Na(+)(in) + 3 H(+)(out) = 2 Na(+)(out) + 3 H(+)(in). Functionally, na(+)/H(+) antiporter that extrudes sodium in exchange for external protons. The protein is Na(+)/H(+) antiporter NhaB of Pseudomonas entomophila (strain L48).